The following is a 355-amino-acid chain: C-C chemokine receptor type 1 (355 aa).

Topologically, residues 1–34 are extracellular; the sequence is MEISDFTEAYPTTTEFDYGDSTPCQKTAVRAFGA. The helical transmembrane segment at 35 to 60 threads the bilayer; sequence GLLPPLYSLVFIIGVVGNVLVILVLM. Residues 61–64 lie on the Cytoplasmic side of the membrane; sequence QHRR. A helical membrane pass occupies residues 65 to 91; that stretch reads LQSMTSIYLFNLAVSDLVFLFTLPFWI. The Extracellular portion of the chain corresponds to 92–107; the sequence is DYKLKDDWIFGDAMCK. A disulfide bond links Cys106 and Cys183. The helical transmembrane segment at 108 to 129 threads the bilayer; it reads LLSGFYYLGLYSEIFFIILLTI. Over 130–146 the chain is Cytoplasmic; that stretch reads DRYLAIVHAVFALRART. Residues 147–171 form a helical membrane-spanning segment; that stretch reads VTFGIITSIITWALAILASMPALYF. Residues 172–197 are Extracellular-facing; the sequence is FKAQWEFTHRTCSPHFPYKSLKQWKR. The helical transmembrane segment at 198-223 threads the bilayer; it reads FQALKLNLLGLILPLLVMIICYAGII. Topologically, residues 224 to 239 are cytoplasmic; the sequence is RILLRRPSEKKVKAVR. The helical transmembrane segment at 240–264 threads the bilayer; it reads LIFAITLLFFLLWTPYNLSVFVSAF. Residues 265 to 281 are Extracellular-facing; the sequence is QDVLFTNQCEQSKQLDL. The chain crosses the membrane as a helical span at residues 282 to 305; sequence AMQVTEVIAYTHCCVNPIIYVFVG. The Cytoplasmic portion of the chain corresponds to 306–355; that stretch reads ERFWKYLRQLFQRHVAIPLAKWLPFLSVDQLERTSSISPSTGEHELSAGF.

The protein belongs to the G-protein coupled receptor 1 family. In terms of assembly, interacts with CREB3. Interacts with CCL3. Interacts with CCL15. Interacts with CCL23. Interacts with GNAI1. Interacts with PF4/CXCL4. As to expression, detected in the heart, spleen, lung, peritoneal exudate cells and leukocytes.

Its subcellular location is the cell membrane. Chemokine receptor that plays a crucial role in regulating immune cell migration, inflammation, and immune responses. Contributes to the inflammatory response by recruiting immune cells, such as monocytes, macrophages, T-cells, and dendritic cells, to sites of inflammation for the clearance of pathogens and the resolution of tissue damage. When activated by its ligands including CCL3, CCL5-9, CCL13-16 and CCL23, triggers a signaling cascade within immune cells, leading to their migration towards the source of the chemokine. For example, mediates neutrophil migration after activation by CCL3 leading to the sequential release of TNF-alpha and leukotriene B4. Also mediates monocyte migration upon CXCL4 binding. Activation by CCL5 results in neuroinflammation through the ERK1/2 signaling pathway. The chain is C-C chemokine receptor type 1 (Ccr1) from Mus musculus (Mouse).